The primary structure comprises 196 residues: MTQIILASTSAYRRMLLEKLRLPFICAAPNTDETPRMNENAEQLVMRLAQAKAQALQTKYSQHLIIGSDQVCVINGEITGKPHSFEHAFKQLRQASGHCVTFYTGISLFNSKTGITDTRCELFNVYFRELADDEIRAYLTAENPLNCAGSFKSEGLGITLFERLEGKDPNTLIGLPLITLTELLIRQGVNPLTAIG.

The active-site Proton acceptor is the Asp69.

The protein belongs to the Maf family. YceF subfamily. A divalent metal cation is required as a cofactor.

It is found in the cytoplasm. It catalyses the reaction N(7)-methyl-GTP + H2O = N(7)-methyl-GMP + diphosphate + H(+). Nucleoside triphosphate pyrophosphatase that hydrolyzes 7-methyl-GTP (m(7)GTP). May have a dual role in cell division arrest and in preventing the incorporation of modified nucleotides into cellular nucleic acids. This is 7-methyl-GTP pyrophosphatase from Photorhabdus laumondii subsp. laumondii (strain DSM 15139 / CIP 105565 / TT01) (Photorhabdus luminescens subsp. laumondii).